Reading from the N-terminus, the 274-residue chain is Putative pyruvate, phosphate dikinase regulatory protein (274 aa).

ADP is bound at residue 151–158; sequence GVSRTSKT.

This sequence belongs to the pyruvate, phosphate/water dikinase regulatory protein family. PDRP subfamily.

The enzyme catalyses N(tele)-phospho-L-histidyl/L-threonyl-[pyruvate, phosphate dikinase] + ADP = N(tele)-phospho-L-histidyl/O-phospho-L-threonyl-[pyruvate, phosphate dikinase] + AMP + H(+). It carries out the reaction N(tele)-phospho-L-histidyl/O-phospho-L-threonyl-[pyruvate, phosphate dikinase] + phosphate + H(+) = N(tele)-phospho-L-histidyl/L-threonyl-[pyruvate, phosphate dikinase] + diphosphate. Functionally, bifunctional serine/threonine kinase and phosphorylase involved in the regulation of the pyruvate, phosphate dikinase (PPDK) by catalyzing its phosphorylation/dephosphorylation. The polypeptide is Putative pyruvate, phosphate dikinase regulatory protein (Pelagibacter ubique (strain HTCC1062)).